Here is a 191-residue protein sequence, read N- to C-terminus: Probable protein-S-isoprenylcysteine O-methyltransferase (191 aa).

3 helical membrane-spanning segments follow: residues 8–28 (WLFA…AAAF), 45–65 (YVLA…LFPE), and 66–86 (LKEY…GEVI). Residues 110–113 (HKLI), Tyr-118, and 123–126 (HPGY) contribute to the S-adenosyl-L-methionine site. A helical membrane pass occupies residues 129 to 149 (FLIWAVGTQVMLCNPLSTVAF). Arg-160 is a binding site for substrate. An S-adenosyl-L-methionine-binding site is contributed by Glu-164.

It belongs to the class VI-like SAM-binding methyltransferase superfamily. Isoprenylcysteine carboxyl methyltransferase family. Zn(2+) is required as a cofactor.

Its subcellular location is the endoplasmic reticulum membrane. The enzyme catalyses [protein]-C-terminal S-[(2E,6E)-farnesyl]-L-cysteine + S-adenosyl-L-methionine = [protein]-C-terminal S-[(2E,6E)-farnesyl]-L-cysteine methyl ester + S-adenosyl-L-homocysteine. In terms of biological role, catalyzes the post-translational methylation of isoprenylated C-terminal cysteine residues. Carboxyl methylation is a reversible and potentially regulated step in the post-translational modification of prenylated proteins. This chain is Probable protein-S-isoprenylcysteine O-methyltransferase (ICMT), found in Oryza sativa subsp. indica (Rice).